Here is a 490-residue protein sequence, read N- to C-terminus: Tegument protein VP16 (490 aa).

Positions 11 to 35 (DADGVSPPPPRPAGGPKNTPAAPPL) are disordered. Residues S16, S351, S411, and S453 each carry the phosphoserine modification. Positions 411–490 (STTAPITDVS…DAMGIDDFGG (80 aa)) are transcriptional activation.

Belongs to the herpesviridae tegument protein VP16 protein family. In terms of assembly, interacts with VP22. Interacts with gH (via C-terminus). Interacts with the virion host shutoff protein (vhs). Interacts with VP11/12. Associates with the VP16-induced complex; binding to host HCFC1 activates VP16 for association with the octamer motif-binding host protein POU2F1, to form a multiprotein-DNA complex responsible for activating transcription of the viral immediate early genes.

It is found in the virion tegument. The protein localises to the host nucleus. Transcriptional activator of immediate-early (IE) gene products (alpha genes). Acts as a key activator of lytic infection by initiating the lytic program through the assembly of the transcriptional regulatory VP16-induced complex composed of VP16 and two cellular factors, HCFC1 and POU2F 1. VP16-induced complex represents a regulatory switch: when it is on, it promotes IE-gene expression and thus lytic infection, and when it is off, it limits IE-gene transcription favoring latent infection. Functionally, may play a role in the aggregation of tegument proteins around nucleocapsids during virus morphogenesis. The sequence is that of Tegument protein VP16 from Human herpesvirus 2 (strain 333) (HHV-2).